Reading from the N-terminus, the 441-residue chain is UPF0761 membrane protein Clim_1521 (441 aa).

6 helical membrane passes run 54–74 (IFLS…PFLA), 122–142 (TVPL…ISTI), 161–181 (AFTL…SSLG), 203–223 (LISF…YMLV), 233–253 (AFSG…WFVF), and 266–286 (GAIS…LVVL).

Belongs to the UPF0761 family.

It is found in the cell inner membrane. The protein is UPF0761 membrane protein Clim_1521 of Chlorobium limicola (strain DSM 245 / NBRC 103803 / 6330).